The primary structure comprises 179 residues: ATP synthase subunit delta (179 aa).

The protein belongs to the ATPase delta chain family. F-type ATPases have 2 components, F(1) - the catalytic core - and F(0) - the membrane proton channel. F(1) has five subunits: alpha(3), beta(3), gamma(1), delta(1), epsilon(1). F(0) has three main subunits: a(1), b(2) and c(10-14). The alpha and beta chains form an alternating ring which encloses part of the gamma chain. F(1) is attached to F(0) by a central stalk formed by the gamma and epsilon chains, while a peripheral stalk is formed by the delta and b chains.

It is found in the cell inner membrane. In terms of biological role, f(1)F(0) ATP synthase produces ATP from ADP in the presence of a proton or sodium gradient. F-type ATPases consist of two structural domains, F(1) containing the extramembraneous catalytic core and F(0) containing the membrane proton channel, linked together by a central stalk and a peripheral stalk. During catalysis, ATP synthesis in the catalytic domain of F(1) is coupled via a rotary mechanism of the central stalk subunits to proton translocation. Functionally, this protein is part of the stalk that links CF(0) to CF(1). It either transmits conformational changes from CF(0) to CF(1) or is implicated in proton conduction. This Anaeromyxobacter sp. (strain Fw109-5) protein is ATP synthase subunit delta.